The sequence spans 229 residues: Enolase-phosphatase E1 (229 aa).

The segment at 206–229 (DRDPASHHPQVQRFDDIHPEQIPA) is disordered. The span at 218–229 (RFDDIHPEQIPA) shows a compositional bias: basic and acidic residues.

This sequence belongs to the HAD-like hydrolase superfamily. MasA/MtnC family. Monomer. The cofactor is Mg(2+).

The catalysed reaction is 5-methylsulfanyl-2,3-dioxopentyl phosphate + H2O = 1,2-dihydroxy-5-(methylsulfanyl)pent-1-en-3-one + phosphate. The protein operates within amino-acid biosynthesis; L-methionine biosynthesis via salvage pathway; L-methionine from S-methyl-5-thio-alpha-D-ribose 1-phosphate: step 3/6. It participates in amino-acid biosynthesis; L-methionine biosynthesis via salvage pathway; L-methionine from S-methyl-5-thio-alpha-D-ribose 1-phosphate: step 4/6. Bifunctional enzyme that catalyzes the enolization of 2,3-diketo-5-methylthiopentyl-1-phosphate (DK-MTP-1-P) into the intermediate 2-hydroxy-3-keto-5-methylthiopentenyl-1-phosphate (HK-MTPenyl-1-P), which is then dephosphorylated to form the acireductone 1,2-dihydroxy-3-keto-5-methylthiopentene (DHK-MTPene). This Klebsiella oxytoca protein is Enolase-phosphatase E1.